A 349-amino-acid polypeptide reads, in one-letter code: Protein RecA (349 aa).

Residue 65–72 (GPESSGKT) coordinates ATP. The tract at residues 329–349 (FDGDVDENENEDDSPKTLFDE) is disordered. Over residues 331-340 (GDVDENENED) the composition is skewed to acidic residues.

The protein belongs to the RecA family.

Its subcellular location is the cytoplasm. In terms of biological role, can catalyze the hydrolysis of ATP in the presence of single-stranded DNA, the ATP-dependent uptake of single-stranded DNA by duplex DNA, and the ATP-dependent hybridization of homologous single-stranded DNAs. It interacts with LexA causing its activation and leading to its autocatalytic cleavage. The sequence is that of Protein RecA from Staphylococcus epidermidis (strain ATCC 35984 / DSM 28319 / BCRC 17069 / CCUG 31568 / BM 3577 / RP62A).